We begin with the raw amino-acid sequence, 361 residues long: Epi-isozizaene synthase (361 aa).

Positions 99, 103, 240, 244, and 248 each coordinate Mg(2+). Positions 99-103 match the DDXXD motif motif; sequence DDRHD.

It belongs to the terpene synthase family. It depends on Mg(2+) as a cofactor. Mn(2+) serves as cofactor. Requires Fe(3+) as cofactor.

It catalyses the reaction (2E,6E)-farnesyl diphosphate = (+)-epi-isozizaene + diphosphate. Its pathway is sesquiterpene biosynthesis; epi-isozizaene biosynthesis. Catalyzes the cyclization of farnesyl diphosphate (FPP) to the sesquiterpene epi-isozizaene. The polypeptide is Epi-isozizaene synthase (cyc1) (Streptomyces coelicolor (strain ATCC BAA-471 / A3(2) / M145)).